The chain runs to 148 residues: Snaclec crotocetin (148 aa).

The first 23 residues, 1 to 23 (MGRLVFVSFGLLVVFLSLTGTGA), serve as a signal peptide directing secretion. 3 disulfides stabilise this stretch: Cys-27–Cys-38, Cys-55–Cys-144, and Cys-121–Cys-136. The C-type lectin domain maps to 34 to 145 (YEGHCYKVFK…CSKTHKVVCK (112 aa)).

The protein belongs to the snaclec family. In terms of assembly, heterodimer; disulfide-linked. As to expression, expressed by the venom gland.

It localises to the secreted. Functionally, interferes with one step of hemostasis (modulation of platelet aggregation, or coagulation cascade, for example). This Crotalus durissus terrificus (South American rattlesnake) protein is Snaclec crotocetin.